We begin with the raw amino-acid sequence, 362 residues long: Protein RecA (362 aa).

ATP is bound at residue 67–74 (GPESSGKT). The segment covering 337–356 (VADAPADSAPAPVAAVAPKA) has biased composition (low complexity). Positions 337 to 362 (VADAPADSAPAPVAAVAPKASARKSA) are disordered.

Belongs to the RecA family.

It is found in the cytoplasm. Can catalyze the hydrolysis of ATP in the presence of single-stranded DNA, the ATP-dependent uptake of single-stranded DNA by duplex DNA, and the ATP-dependent hybridization of homologous single-stranded DNAs. It interacts with LexA causing its activation and leading to its autocatalytic cleavage. This Clavibacter michiganensis subsp. michiganensis (strain NCPPB 382) protein is Protein RecA.